Reading from the N-terminus, the 68-residue chain is MGALAAAIAIGLAALGAGLGNGMIVSKTVEGIARQPELRGALQGTMFIGVALVEAIPIIAAVIAFMVM.

2 consecutive transmembrane segments (helical) span residues Ala-5–Val-25 and Phe-47–Val-67.

It belongs to the ATPase C chain family. As to quaternary structure, F-type ATPases have 2 components, F(1) - the catalytic core - and F(0) - the membrane proton channel. F(1) has five subunits: alpha(3), beta(3), gamma(1), delta(1), epsilon(1). F(0) has three main subunits: a(1), b(2) and c(10-14). The alpha and beta chains form an alternating ring which encloses part of the gamma chain. F(1) is attached to F(0) by a central stalk formed by the gamma and epsilon chains, while a peripheral stalk is formed by the delta and b chains.

Its subcellular location is the cell membrane. Its function is as follows. F(1)F(0) ATP synthase produces ATP from ADP in the presence of a proton or sodium gradient. F-type ATPases consist of two structural domains, F(1) containing the extramembraneous catalytic core and F(0) containing the membrane proton channel, linked together by a central stalk and a peripheral stalk. During catalysis, ATP synthesis in the catalytic domain of F(1) is coupled via a rotary mechanism of the central stalk subunits to proton translocation. Key component of the F(0) channel; it plays a direct role in translocation across the membrane. A homomeric c-ring of between 10-14 subunits forms the central stalk rotor element with the F(1) delta and epsilon subunits. The chain is ATP synthase subunit c from Oceanobacillus iheyensis (strain DSM 14371 / CIP 107618 / JCM 11309 / KCTC 3954 / HTE831).